The sequence spans 741 residues: MQKKRIGKSVVAALAIIAMSAGTVAAWADGAPRTNDFWWPERLDLSPLRQHDVESNPYGKDFDYAQAFNKLDIEAVKKDIRATLTTSQDWWPADYGNYGPFFIRMAWHGAGTYRTYDGRGGAGGAQQRFEPLNSWPDNANLDKARRLLWPIKKKYGQNISWGDLMVLTGNVALESMGFQTFGFGGGREDDWQSDLVYWGAGTKFMSDNRDKNGKLEKPLAATQMGLIYVNPEGPNGNPDPVAAAKDIREAFGRMAMNDEETLALIAGGHTFGKAHGAASPDKCVGAAPAGAGVEAQGLGWANKCGTGKGADTITSGLEGAWSVDPVHFTMQYLDNLLEHDWVLTKSPAGAHQWMPKDAQDIVPDAHDPSKRHPLMMFTTDIALKVDPAYSAIAKRFQAHPEEFKLAFAKAWFKLTHRDLGPKARYLGKDVPKVDLIWQDPLPVAGYQMIGDADIAELKRRILASGVPKSELIKTAWASAASFRATDYRGGANGARIRLAPENAWAVNDPASLSKVLKSLEDIQSGFNRNRTDGKQVSLADLIVLGGSAAVEDAARKAGYDVKVPFSPGRVDATQAQTDVASFAVLEPTSDGFRNYYRKSNERSPAELMVDRASKLDLSVPEMTVLVGGLRALDANAGHSRLGVLTNRPGTLSNDFFVNLLDMSTQWTKSSSADGTYEGRDRKTGALKWTASPVDLVFGSSSELRAVAEVYASDDAHEKFVRDFVHAWTKVMNLDRFDLKRS.

An N-terminal signal peptide occupies residues 1–28 (MQKKRIGKSVVAALAIIAMSAGTVAAWA). The segment at residues 107-228 (WHGAGTYRTY…LAATQMGLIY (122 aa)) is a cross-link (tryptophyl-tyrosyl-methioninium (Trp-Tyr) (with M-254)). Catalysis depends on H108, which acts as the Proton acceptor. A cross-link (tryptophyl-tyrosyl-methioninium (Tyr-Met) (with W-107)) is located at residues 228–254 (YVNPEGPNGNPDPVAAAKDIREAFGRM). H269 provides a ligand contact to heme b.

Belongs to the peroxidase family. Peroxidase/catalase subfamily. As to quaternary structure, homodimer or homotetramer. The cofactor is heme b. Post-translationally, formation of the three residue Trp-Tyr-Met cross-link is important for the catalase, but not the peroxidase activity of the enzyme.

It catalyses the reaction H2O2 + AH2 = A + 2 H2O. The catalysed reaction is 2 H2O2 = O2 + 2 H2O. Bifunctional enzyme with both catalase and broad-spectrum peroxidase activity. The sequence is that of Catalase-peroxidase 2 from Burkholderia ambifaria (strain MC40-6).